The primary structure comprises 152 residues: Putative toxin MJ1304 (152 aa).

The region spanning 15 to 135 (IKRAEEDLEV…EECLKDAENV (121 aa)) is the HEPN domain.

In terms of biological role, putative toxin component of a putative type VII toxin-antitoxin (TA) system. Its cognate antitoxin might be MJ1305. The protein is Putative toxin MJ1304 of Methanocaldococcus jannaschii (strain ATCC 43067 / DSM 2661 / JAL-1 / JCM 10045 / NBRC 100440) (Methanococcus jannaschii).